Reading from the N-terminus, the 747-residue chain is H(+)/Cl(-) exchange transporter 4 (747 aa).

A required for localization in the endoplasmic reticulum region spans residues 1 to 50; sequence MDFLEEPFPDVGTYEDFHTIDWLREKSRDTDRHRKITSKSKESIWEFIKS. Topologically, residues 1–54 are cytoplasmic; that stretch reads MDFLEEPFPDVGTYEDFHTIDWLREKSRDTDRHRKITSKSKESIWEFIKSLLDA. The next 2 membrane-spanning stretches (helical) occupy residues 55-92 and 138-161; these read WSGW…VCLS and LNYL…VRVF. The short motif at 167-171 is the Selectivity filter part_1 element; it reads GSGIP. Serine 168 lines the chloride pocket. Positions 170–177 form an intramembrane region, helical; sequence IPEIKTIL. 2 consecutive transmembrane segments (helical) span residues 187–205 and 211–230; these read GKWT…VSSG and EGPL…SLFS. A Selectivity filter part_2 motif is present at residues 209-213; the sequence is GKEGP. Intramembrane regions (helical) lie at residues 242 to 254 and 258 to 266; these read VLSA…VSVA and PIGGVLFSL. 5 consecutive transmembrane segments (helical) span residues 278 to 296, 320 to 345, 352 to 372, 429 to 449, and 454 to 473; these read LWRS…RSIN, FPFI…AWCR, LGRY…IVAY, MWQL…TFGM, and GLFI…VGIG. Residues 454 to 458 carry the Selectivity filter part_3 motif; it reads GLFIP. Phenylalanine 456 provides a ligand contact to chloride. 2 consecutive intramembrane regions (helical) follow at residues 501-515 and 519-530; these read GLYA…LGGV and TVSLVVIMFELT. Positions 531–534 form an intramembrane region, note=Loop between two helices; it reads GGLE. A helical transmembrane segment spans residues 535–553; that stretch reads YIVPLMAAAVTSKWVADAF. At 554–747 the chain is on the cytoplasmic side; the sequence is GKEGIYEAHI…NQDPESIMFN (194 aa). Tyrosine 559 serves as a coordination point for chloride. CBS domains lie at 587–653 and 680–742; these read MRPR…QRQE and LRRI…QDPE. ATP is bound by residues serine 597 and 618 to 620; that span reads YNG. Residues 654–683 form a required for localization in the endoplasmic reticulum region; it reads GIVSNSIMYFTEEPPELPANSPHPLKLRRI. ATP is bound at residue 725 to 728; sequence TKKD.

This sequence belongs to the chloride channel (TC 2.A.49) family. ClC-4/CLCN4 subfamily. Predominantly present in excitable tissues such as nervous system and skeletal muscle. Not detected in heart.

It localises to the early endosome membrane. Its subcellular location is the late endosome membrane. It is found in the endoplasmic reticulum membrane. The protein localises to the lysosome membrane. The protein resides in the recycling endosome membrane. Strongly outwardly rectifying, electrogenic H(+)/Cl(-)exchanger which mediates the exchange of chloride ions against protons. The CLC channel family contains both chloride channels and proton-coupled anion transporters that exchange chloride or another anion for protons. The presence of conserved gating glutamate residues is typical for family members that function as antiporters. The chain is H(+)/Cl(-) exchange transporter 4 (Clcn4) from Mus musculus (Mouse).